Reading from the N-terminus, the 213-residue chain is Na(+)-translocating NADH-quinone reductase subunit D (213 aa).

The next 6 helical transmembrane spans lie at 21–41 (PLIA…VNTA), 42–62 (ITMG…VSLL), 69–86 (SVRM…VIVI), 101–121 (LSVF…AESL), 131–151 (FLDG…VSIV), and 183–203 (FGLM…IWGV).

This sequence belongs to the NqrDE/RnfAE family. Composed of six subunits; NqrA, NqrB, NqrC, NqrD, NqrE and NqrF.

Its subcellular location is the cell inner membrane. The enzyme catalyses a ubiquinone + n Na(+)(in) + NADH + H(+) = a ubiquinol + n Na(+)(out) + NAD(+). NQR complex catalyzes the reduction of ubiquinone-1 to ubiquinol by two successive reactions, coupled with the transport of Na(+) ions from the cytoplasm to the periplasm. NqrA to NqrE are probably involved in the second step, the conversion of ubisemiquinone to ubiquinol. The sequence is that of Na(+)-translocating NADH-quinone reductase subunit D from Chlamydia caviae (strain ATCC VR-813 / DSM 19441 / 03DC25 / GPIC) (Chlamydophila caviae).